Reading from the N-terminus, the 446-residue chain is Transcriptional adapter 2-alpha (446 aa).

The ZZ-type zinc finger occupies 12 to 69 (FDKPPCRGCSSYLTEPYVKCAECGPPPFLLCLQCFTRGFEYKKHQSDHTYEIMTSDFP). Positions 17, 20, 31, 34, 42, 45, 55, and 59 each coordinate Zn(2+). The region spanning 70–122 (VLDPNWTAQEEMALLEAVMDCGFGNWQDVANQMCTKSKEECEKHYMKHFINNP) is the SANT domain. The segment at 345 to 375 (DIDSGPTPAAPIPSNSGRRSAPPLNLTGLPG) is disordered. Residues 359–446 (NSGRRSAPPL…LIREGYITKA (88 aa)) enclose the SWIRM domain. The DNA-binding element occupies 429-438 (KTRKIYDFLI).

It is found in the nucleus. It localises to the chromosome. Functionally, component of some complex with histone acetyltransferase activity. Required for the function of some acidic activation domains, which activate transcription from a distant site. Binds double-stranded DNA. Binds dinucleosomes, probably at the linker region between neighboring nucleosomes. Plays a role in chromatin remodeling. This chain is Transcriptional adapter 2-alpha (TADA2A), found in Gallus gallus (Chicken).